The sequence spans 407 residues: Aminomethyltransferase, mitochondrial (407 aa).

The N-terminal 29 residues, 1 to 29, are a transit peptide targeting the mitochondrion; that stretch reads MRGGLWQLGQSITRRLGQSDKKTIARRCY. The substrate site is built by Glu234, Arg265, and Tyr403.

It belongs to the GcvT family. As to quaternary structure, the glycine cleavage system is composed of four proteins: P, T, L and H.

The protein resides in the mitochondrion. The catalysed reaction is N(6)-[(R)-S(8)-aminomethyldihydrolipoyl]-L-lysyl-[protein] + (6S)-5,6,7,8-tetrahydrofolate = N(6)-[(R)-dihydrolipoyl]-L-lysyl-[protein] + (6R)-5,10-methylene-5,6,7,8-tetrahydrofolate + NH4(+). The glycine cleavage system catalyzes the degradation of glycine. This is Aminomethyltransferase, mitochondrial (GDCST) from Flaveria pringlei.